A 433-amino-acid polypeptide reads, in one-letter code: KICSTOR complex protein ITFG2 (433 aa).

An FG-GAP 1; atypical repeat occupies 19–48 (FPHAICLGDVDNDTLNELVVGDTSGKVSVY). Position 104 is a phosphoserine (S104). One copy of the FG-GAP 2; atypical repeat lies at 126–155 (NTKVMLISDIDGDGCRELVVGYTDRVVRAF). Phosphoserine is present on S220.

As to quaternary structure, part of the KICSTOR complex composed of KPTN, ITFG2, KICS2 and SZT2. SZT2 probably serves as a link between the other three proteins in the KICSTOR complex and may mediate the direct interaction with the GATOR complex via GATOR1. The KICSTOR complex interacts directly with the GATOR1 complex and most probably indirectly with the GATOR2 complex in an amino acid-independent manner.

Its subcellular location is the lysosome membrane. As part of the KICSTOR complex functions in the amino acid-sensing branch of the TORC1 signaling pathway. Recruits, in an amino acid-independent manner, the GATOR1 complex to the lysosomal membranes and allows its interaction with GATOR2 and the RAG GTPases. Functions upstream of the RAG GTPases and is required to negatively regulate mTORC1 signaling in absence of amino acids. In absence of the KICSTOR complex mTORC1 is constitutively localized to the lysosome and activated. The KICSTOR complex is also probably involved in the regulation of mTORC1 by glucose. This chain is KICSTOR complex protein ITFG2, found in Pongo abelii (Sumatran orangutan).